We begin with the raw amino-acid sequence, 175 residues long: NADH-ubiquinone oxidoreductase chain 6 (175 aa).

5 helical membrane passes run 1–21 (MMTYIVFILSVIFVIGFVGFS), 25–45 (SPIYGGLVLIVSGGVGCGIIM), 47–67 (FGGSFLGLMVFLIYLGGMLVV), 88–108 (TVMGVFLLGLLMEVMLVLYVL), and 149–169 (YGAWVVVVTGWSLLVGVLVIL).

The protein belongs to the complex I subunit 6 family. Core subunit of respiratory chain NADH dehydrogenase (Complex I) which is composed of 45 different subunits.

It localises to the mitochondrion inner membrane. It carries out the reaction a ubiquinone + NADH + 5 H(+)(in) = a ubiquinol + NAD(+) + 4 H(+)(out). In terms of biological role, core subunit of the mitochondrial membrane respiratory chain NADH dehydrogenase (Complex I) which catalyzes electron transfer from NADH through the respiratory chain, using ubiquinone as an electron acceptor. Essential for the catalytic activity and assembly of complex I. This Equus asinus (Donkey) protein is NADH-ubiquinone oxidoreductase chain 6 (MT-ND6).